Here is a 97-residue protein sequence, read N- to C-terminus: Cobalt transport protein CbiN (97 aa).

2 helical membrane-spanning segments follow: residues 6–26 (VLMILGVIILTLAPLIMYSGL) and 68–88 (SLLFALQAAIGAMIIGYFFGY).

It belongs to the CbiN family. Forms an energy-coupling factor (ECF) transporter complex composed of an ATP-binding protein (A component, CbiO), a transmembrane protein (T component, CbiQ) and 2 possible substrate-capture proteins (S components, CbiM and CbiN) of unknown stoichimetry.

The protein resides in the cell membrane. It participates in cofactor biosynthesis; adenosylcobalamin biosynthesis. Its function is as follows. Part of the energy-coupling factor (ECF) transporter complex CbiMNOQ involved in cobalt import. This Methanococcus maripaludis (strain C6 / ATCC BAA-1332) protein is Cobalt transport protein CbiN.